Consider the following 316-residue polypeptide: Protoheme IX farnesyltransferase (316 aa).

9 helical membrane-spanning segments follow: residues 28–48 (WLAL…AAGM), 57–77 (IPIG…AGAI), 106–126 (AALV…WLAT), 129–149 (LAAD…TMWL), 156–176 (NIVI…AATM), 179–199 (MAVL…PHFW), 230–250 (ILIY…VHEV), 254–274 (YTVV…RVLM), and 296–316 (YSLV…VLIG).

Belongs to the UbiA prenyltransferase family. Protoheme IX farnesyltransferase subfamily.

It localises to the cell inner membrane. The catalysed reaction is heme b + (2E,6E)-farnesyl diphosphate + H2O = Fe(II)-heme o + diphosphate. The protein operates within porphyrin-containing compound metabolism; heme O biosynthesis; heme O from protoheme: step 1/1. Converts heme B (protoheme IX) to heme O by substitution of the vinyl group on carbon 2 of heme B porphyrin ring with a hydroxyethyl farnesyl side group. This Gluconobacter oxydans (strain 621H) (Gluconobacter suboxydans) protein is Protoheme IX farnesyltransferase.